We begin with the raw amino-acid sequence, 400 residues long: Phosphoglycerate kinase (400 aa).

Substrate is bound by residues 21 to 23 (DLN), arginine 36, 59 to 62 (HLGR), arginine 116, and arginine 149. ATP is bound by residues lysine 200, glutamate 317, and 343-346 (GGDT).

Belongs to the phosphoglycerate kinase family. In terms of assembly, monomer.

Its subcellular location is the cytoplasm. It carries out the reaction (2R)-3-phosphoglycerate + ATP = (2R)-3-phospho-glyceroyl phosphate + ADP. Its pathway is carbohydrate degradation; glycolysis; pyruvate from D-glyceraldehyde 3-phosphate: step 2/5. This chain is Phosphoglycerate kinase, found in Blochmanniella floridana.